A 216-amino-acid polypeptide reads, in one-letter code: Thiopurine S-methyltransferase (216 aa).

Residues Trp-10, Leu-45, Glu-66, and Arg-123 each contribute to the S-adenosyl-L-methionine site.

The protein belongs to the class I-like SAM-binding methyltransferase superfamily. TPMT family.

Its subcellular location is the cytoplasm. The enzyme catalyses S-adenosyl-L-methionine + a thiopurine = S-adenosyl-L-homocysteine + a thiopurine S-methylether.. This is Thiopurine S-methyltransferase from Pseudomonas putida (strain GB-1).